A 383-amino-acid polypeptide reads, in one-letter code: MLISQLKKFDAYPKTVDDFRVKTYTGAIVSIIGGVFILWLFFSQVTLYFSTDIHHELFVDTTRGEKLKINMDITFHHLPCAYLSLDAMDVSGEHQFDVAHNIFKKRLSPTGQPIIEAPPIREEEINKKESVKDNNDVVGCGSCYGAEDPSKGIGCCNTCEEVRVAYSKKGWGLDPSGIPQCIREGFTKNLVEQNGEGCQVYGFILVNKVAGNFHFAPGKSFQQHHMHVHDLQPFKDGSFNVSHTINRLSFGNDFPGIKNPLDDVTKTEMVGVGMFQYFVKVVPTIYEGLNGNRIATNQYSVTEHYRLLAKKGEEPSGLPGLFFMYDLSPIMMKVSERGKSFASFLTNVCAIIGGVFTVFGIFDSFIYYSTKNLQKKIDLGKTF.

Residues 1–26 (MLISQLKKFDAYPKTVDDFRVKTYTG) are Cytoplasmic-facing. Residues 27 to 47 (AIVSIIGGVFILWLFFSQVTL) traverse the membrane as a helical segment. Residues 48-347 (YFSTDIHHEL…GKSFASFLTN (300 aa)) are Lumenal-facing. The helical transmembrane segment at 348–368 (VCAIIGGVFTVFGIFDSFIYY) threads the bilayer. Topologically, residues 369-383 (STKNLQKKIDLGKTF) are cytoplasmic.

Belongs to the ERGIC family.

It is found in the endoplasmic reticulum-Golgi intermediate compartment membrane. The protein resides in the golgi apparatus. It localises to the cis-Golgi network membrane. Its subcellular location is the endoplasmic reticulum membrane. In terms of biological role, possible role in transport between endoplasmic reticulum and Golgi. In Dictyostelium discoideum (Social amoeba), this protein is Probable endoplasmic reticulum-Golgi intermediate compartment protein 3 (ergic3).